A 362-amino-acid polypeptide reads, in one-letter code: 3-isopropylmalate dehydrogenase (362 aa).

Position 78 to 91 (78 to 91 (GYKWDSLPPHQRPE)) interacts with NAD(+). Residues Arg98, Arg108, Arg136, and Asp226 each contribute to the substrate site. The Mg(2+) site is built by Asp226, Asp250, and Asp254. NAD(+) is bound at residue 284 to 296 (GSAPDIAGLDKAN).

Belongs to the isocitrate and isopropylmalate dehydrogenases family. LeuB type 1 subfamily. As to quaternary structure, homodimer. It depends on Mg(2+) as a cofactor. Requires Mn(2+) as cofactor.

The protein localises to the cytoplasm. The enzyme catalyses (2R,3S)-3-isopropylmalate + NAD(+) = 4-methyl-2-oxopentanoate + CO2 + NADH. Its pathway is amino-acid biosynthesis; L-leucine biosynthesis; L-leucine from 3-methyl-2-oxobutanoate: step 3/4. Catalyzes the oxidation of 3-carboxy-2-hydroxy-4-methylpentanoate (3-isopropylmalate) to 3-carboxy-4-methyl-2-oxopentanoate. The product decarboxylates to 4-methyl-2 oxopentanoate. This is 3-isopropylmalate dehydrogenase from Trichormus variabilis (strain ATCC 29413 / PCC 7937) (Anabaena variabilis).